The sequence spans 478 residues: Calcitonin receptor (478 aa).

The first 22 residues, 1–22 (MRFTFTRQFLAFFILISNPASI), serve as a signal peptide directing secretion. The Extracellular segment spans residues 23–146 (LPRSENLTFP…FTPEKLQNAY (124 aa)). N-linked (GlcNAc...) asparagine glycans are attached at residues Asn28, Asn73, Asn125, and Asn130. Cystine bridges form between Cys55/Cys81, Cys72/Cys112, and Cys95/Cys134. Residues 147–169 (VLYYLAIVGHSMSIITLVVSLGI) traverse the membrane as a helical segment. The Cytoplasmic portion of the chain corresponds to 170–181 (FVYFRSLGCQRV). The chain crosses the membrane as a helical span at residues 182-202 (TLHKNMFLTYILNSMIIIIHL). Over 203–219 (VEVVPNGELVRKDPVSC) the chain is Extracellular. An intrachain disulfide couples Cys219 to Cys289. Residues 220–242 (KILHFFHQYMMACNYFWMLCEGI) traverse the membrane as a helical segment. Residues 243 to 259 (YLHTLIVVSVFNEAKHL) lie on the Cytoplasmic side of the membrane. The helical transmembrane segment at 260–280 (RWYYLLGWGFPLVPTTIHAIT) threads the bilayer. At 281–296 (RALYFNDNCWISVDTH) the chain is on the extracellular side. The chain crosses the membrane as a helical span at residues 297-320 (LLYIIHGPVMVALVVNFFFLLNIV). Residues 321 to 340 (RVLVTKMRETHEAESYMYLK) are Cytoplasmic-facing. Residues 341-359 (AVKATMILVPLLGIQFVVF) form a helical membrane-spanning segment. Topologically, residues 360–367 (PWRPSNKV) are extracellular. A helical membrane pass occupies residues 368 to 394 (LGKIYDYFMHSLIHFQGFFVATIYCFC). The Cytoplasmic portion of the chain corresponds to 395–478 (NNEVQTTLKR…LNIIEKESSA (84 aa)).

It belongs to the G-protein coupled receptor 2 family. Heterodimer of CALCR and RAMP1, RAMP2 or RAMP3; the receptor complexes function as AMYR1, AMYR2 and AMYR3 receptors, respectively, and respond to amylin/IAPP, calcitonin/CT and CGRP1 ligands. Interacts with GPRASP2.

The protein localises to the cell membrane. In terms of biological role, g protein-coupled receptor activated by ligand peptides amylin (IAPP), calcitonin (CT/CALCA) and calcitonin gene-related peptide type 1 (CGRP1/CALCA). CALCR interacts with receptor-activity-modifying proteins RAMP1, 2 and 3 to form receptor complexes AMYR1, 2 and 3, respectively. IAPP, CT and CGRP1 activate CALCR and AMYRs with distinct modes of receptor activation resulting in specific phenotypes. Ligand binding causes a conformation change that triggers signaling via guanine nucleotide-binding proteins (G proteins) and modulates the activity of downstream effectors. Activates cAMP-dependent pathway. The protein is Calcitonin receptor of Cavia porcellus (Guinea pig).